The primary structure comprises 456 residues: Phosphomethylpyrimidine synthase (456 aa).

Residues asparagine 80, methionine 109, tyrosine 139, histidine 175, 195 to 197 (SRG), 236 to 239 (DSLR), and glutamate 275 each bind substrate. Residue histidine 279 participates in Zn(2+) binding. Tyrosine 302 is a binding site for substrate. A Zn(2+)-binding site is contributed by histidine 343. The [4Fe-4S] cluster site is built by cysteine 423, cysteine 426, and cysteine 431.

Belongs to the ThiC family. [4Fe-4S] cluster is required as a cofactor.

The catalysed reaction is 5-amino-1-(5-phospho-beta-D-ribosyl)imidazole + S-adenosyl-L-methionine = 4-amino-2-methyl-5-(phosphooxymethyl)pyrimidine + CO + 5'-deoxyadenosine + formate + L-methionine + 3 H(+). The protein operates within cofactor biosynthesis; thiamine diphosphate biosynthesis. Its function is as follows. Catalyzes the synthesis of the hydroxymethylpyrimidine phosphate (HMP-P) moiety of thiamine from aminoimidazole ribotide (AIR) in a radical S-adenosyl-L-methionine (SAM)-dependent reaction. In Prochlorococcus marinus (strain MIT 9515), this protein is Phosphomethylpyrimidine synthase.